Consider the following 304-residue polypeptide: Non-specific ribonucleoside hydrolase RihC (304 aa).

Residue histidine 233 is part of the active site.

It belongs to the IUNH family. RihC subfamily.

In terms of biological role, hydrolyzes both purine and pyrimidine ribonucleosides with a broad-substrate specificity. The polypeptide is Non-specific ribonucleoside hydrolase RihC (Klebsiella pneumoniae subsp. pneumoniae (strain ATCC 700721 / MGH 78578)).